A 596-amino-acid chain; its full sequence is Cysteine--tRNA ligase (596 aa).

Residues Met1 to Lys199 form a unknown region. Residue Cys212 participates in Zn(2+) binding. The short motif at Pro214 to Asn224 is the 'HIGH' region element. Residues Cys377, His403, and Glu407 each contribute to the Zn(2+) site. The 'KMSKS' region motif lies at Lys435–Ser439. Lys438 contributes to the ATP binding site.

Belongs to the class-I aminoacyl-tRNA synthetase family. Monomer. It depends on Zn(2+) as a cofactor.

It is found in the cytoplasm. The catalysed reaction is tRNA(Cys) + L-cysteine + ATP = L-cysteinyl-tRNA(Cys) + AMP + diphosphate. The chain is Cysteine--tRNA ligase (cysS) from Mycoplasmopsis pulmonis (strain UAB CTIP) (Mycoplasma pulmonis).